A 61-amino-acid polypeptide reads, in one-letter code: Small ribosomal subunit protein uS14 (61 aa).

4 residues coordinate Zn(2+): Cys-24, Cys-27, Cys-40, and Cys-43.

It belongs to the universal ribosomal protein uS14 family. Zinc-binding uS14 subfamily. As to quaternary structure, part of the 30S ribosomal subunit. Contacts proteins S3 and S10. Zn(2+) is required as a cofactor.

Functionally, binds 16S rRNA, required for the assembly of 30S particles and may also be responsible for determining the conformation of the 16S rRNA at the A site. This Limosilactobacillus fermentum (strain NBRC 3956 / LMG 18251) (Lactobacillus fermentum) protein is Small ribosomal subunit protein uS14.